The primary structure comprises 124 residues: UPF0102 protein Blon_1698/BLIJ_1758 (124 aa).

Belongs to the UPF0102 family.

The sequence is that of UPF0102 protein Blon_1698/BLIJ_1758 from Bifidobacterium longum subsp. infantis (strain ATCC 15697 / DSM 20088 / JCM 1222 / NCTC 11817 / S12).